A 381-amino-acid chain; its full sequence is Periphilin-1 (381 aa).

3 stretches are compositionally biased toward basic and acidic residues: residues 1–28 (MWSE…DGYH), 39–65 (PLLD…GYSR), and 79–121 (RSFS…DGFR). Disordered regions lie at residues 1-65 (MWSE…GYSR) and 79-260 (RSFS…KSDE). The Nuclear localization signal motif lies at 117-123 (RDGFRRK). Lysine 123 is covalently cross-linked (Glycyl lysine isopeptide (Lys-Gly) (interchain with G-Cter in SUMO2)). A phosphoserine mark is found at serine 124, serine 128, serine 147, and serine 154. Positions 130 to 156 (YSRDRSPHKRDAPFFRESPVGRKDSPH) are enriched in basic and acidic residues. Residues 157–168 (SRSGSSVSSRSY) are compositionally biased toward low complexity. Positions 175 to 187 (THSFHQSQHRKSS) are enriched in basic residues. Phosphoserine is present on serine 181. Lysine 194 participates in a covalent cross-link: Glycyl lysine isopeptide (Lys-Gly) (interchain with G-Cter in SUMO2). Positions 195-208 (RQNEAIRGRGKERS) are enriched in basic and acidic residues. Serine 211 is subject to Phosphoserine. Residue lysine 213 forms a Glycyl lysine isopeptide (Lys-Gly) (interchain with G-Cter in SUMO2) linkage. Serine 215 and serine 219 each carry phosphoserine. A compositionally biased stretch (low complexity) spans 217–230 (DASPSSSSAVASSK). Positions 231 to 260 (ALDKPSRLTEKELAEAESKWANETLEKSDE) are enriched in basic and acidic residues. Residue lysine 241 forms a Glycyl lysine isopeptide (Lys-Gly) (interchain with G-Cter in SUMO2) linkage. Lysine 249 is subject to N6-acetyllysine; alternate. Lysine 249 is covalently cross-linked (Glycyl lysine isopeptide (Lys-Gly) (interchain with G-Cter in SUMO2); alternate). Phosphoserine is present on serine 339. A Glycyl lysine isopeptide (Lys-Gly) (interchain with G-Cter in SUMO2) cross-link involves residue lysine 342.

Homodimer. Component of the HUSH complex; at least composed of TASOR, PPHLN1 and MPHOSPH8. Interacts with SIN3A and HDAC1. May interact with PPL. As to expression, ubiquitously expressed. Strong expression in the developing somites and limbs, the embryonic nervous system and the adult brain.

It is found in the nucleus. Its subcellular location is the cytoplasm. It localises to the chromosome. Functionally, component of the HUSH complex, a multiprotein complex that mediates epigenetic repression. The HUSH complex is recruited to genomic loci rich in H3K9me3 and is probably required to maintain transcriptional silencing by promoting recruitment of SETDB1, a histone methyltransferase that mediates further deposition of H3K9me3. In the HUSH complex, contributes to the maintenance of the complex at chromatin. Acts as a transcriptional corepressor and regulates the cell cycle, probably via the HUSH complex. The HUSH complex is also involved in the silencing of unintegrated retroviral DNA: some part of the retroviral DNA formed immediately after infection remains unintegrated in the host genome and is transcriptionally repressed. May be involved in epithelial differentiation by contributing to epidermal integrity and barrier formation. This chain is Periphilin-1, found in Mus musculus (Mouse).